An 89-amino-acid polypeptide reads, in one-letter code: MSRKCPLTGKRPRRGYSYTLRGIAKKKKGIGLKVTGKTKRRFFPNMLTKRLWSTEENRFLKLKISASALRHIDKLGLEKVLERAKSKNF.

It belongs to the bacterial ribosomal protein bL28 family.

The polypeptide is Large ribosomal subunit protein bL28 (Chlamydia pneumoniae (Chlamydophila pneumoniae)).